The chain runs to 262 residues: Malonyl-[acyl-carrier protein] O-methyltransferase (262 aa).

It belongs to the methyltransferase superfamily.

It carries out the reaction malonyl-[ACP] + S-adenosyl-L-methionine = malonyl-[ACP] methyl ester + S-adenosyl-L-homocysteine. The protein operates within cofactor biosynthesis; biotin biosynthesis. Converts the free carboxyl group of a malonyl-thioester to its methyl ester by transfer of a methyl group from S-adenosyl-L-methionine (SAM). It allows to synthesize pimeloyl-ACP via the fatty acid synthetic pathway. The polypeptide is Malonyl-[acyl-carrier protein] O-methyltransferase (Erwinia pyrifoliae (strain DSM 12163 / CIP 106111 / Ep16/96)).